A 410-amino-acid chain; its full sequence is Shaggy-related protein kinase epsilon (410 aa).

Alanine 2 bears the N-acetylalanine mark. The Protein kinase domain occupies 74-358 (YMAERIVGQG…AMEAIVHPFF (285 aa)). ATP contacts are provided by residues 80 to 88 (VGQGSFGIV) and lysine 103. The Proton acceptor role is filled by aspartate 199. Position 234 is a phosphotyrosine (tyrosine 234).

Belongs to the protein kinase superfamily. CMGC Ser/Thr protein kinase family. GSK-3 subfamily. Binds to KIB1. Autophosphorylated mainly on threonine and serine residues.

The catalysed reaction is L-seryl-[protein] + ATP = O-phospho-L-seryl-[protein] + ADP + H(+). It catalyses the reaction L-threonyl-[protein] + ATP = O-phospho-L-threonyl-[protein] + ADP + H(+). Its function is as follows. May mediate extracellular signals to regulate transcription in differentiating cells. The chain is Shaggy-related protein kinase epsilon (ASK5) from Arabidopsis thaliana (Mouse-ear cress).